The following is a 171-amino-acid chain: Co-chaperone protein HscB homolog (171 aa).

The region spanning 2 to 74 is the J domain; that stretch reads NHFELFGLPP…ISRAEYLLSQ (73 aa).

This sequence belongs to the HscB family. Interacts with HscA and stimulates its ATPase activity.

Co-chaperone involved in the maturation of iron-sulfur cluster-containing proteins. Seems to help targeting proteins to be folded toward HscA. The polypeptide is Co-chaperone protein HscB homolog (Vibrio vulnificus (strain CMCP6)).